Consider the following 118-residue polypeptide: Small ribosomal subunit protein uS13 (118 aa).

The segment at 93 to 118 (RGLPVRGQRTKTNARTRKGPRKPIRK) is disordered.

It belongs to the universal ribosomal protein uS13 family. Part of the 30S ribosomal subunit. Forms a loose heterodimer with protein S19. Forms two bridges to the 50S subunit in the 70S ribosome.

Located at the top of the head of the 30S subunit, it contacts several helices of the 16S rRNA. In the 70S ribosome it contacts the 23S rRNA (bridge B1a) and protein L5 of the 50S subunit (bridge B1b), connecting the 2 subunits; these bridges are implicated in subunit movement. Contacts the tRNAs in the A and P-sites. This is Small ribosomal subunit protein uS13 from Azotobacter vinelandii (strain DJ / ATCC BAA-1303).